The following is a 448-amino-acid chain: L-seryl-tRNA(Sec) selenium transferase (448 aa).

At K284 the chain carries N6-(pyridoxal phosphate)lysine.

The protein belongs to the SelA family. Pyridoxal 5'-phosphate is required as a cofactor.

The protein resides in the cytoplasm. It catalyses the reaction L-seryl-tRNA(Sec) + selenophosphate + H(+) = L-selenocysteinyl-tRNA(Sec) + phosphate. It participates in aminoacyl-tRNA biosynthesis; selenocysteinyl-tRNA(Sec) biosynthesis; selenocysteinyl-tRNA(Sec) from L-seryl-tRNA(Sec) (bacterial route): step 1/1. Converts seryl-tRNA(Sec) to selenocysteinyl-tRNA(Sec) required for selenoprotein biosynthesis. This is L-seryl-tRNA(Sec) selenium transferase from Nautilia profundicola (strain ATCC BAA-1463 / DSM 18972 / AmH).